Reading from the N-terminus, the 857-residue chain is Leucine--tRNA ligase (857 aa).

The 'HIGH' region signature appears at 42–52 (PYPSGRLHMGH). Residues 617–621 (KMSKS) carry the 'KMSKS' region motif. Lysine 620 contacts ATP.

This sequence belongs to the class-I aminoacyl-tRNA synthetase family.

Its subcellular location is the cytoplasm. It carries out the reaction tRNA(Leu) + L-leucine + ATP = L-leucyl-tRNA(Leu) + AMP + diphosphate. This is Leucine--tRNA ligase from Vibrio parahaemolyticus serotype O3:K6 (strain RIMD 2210633).